Consider the following 246-residue polypeptide: Large ribosomal subunit protein uL3 (246 aa).

N5-methylglutamine is present on Q151.

This sequence belongs to the universal ribosomal protein uL3 family. Part of the 50S ribosomal subunit. Forms a cluster with proteins L14 and L19. In terms of processing, methylated by PrmB.

One of the primary rRNA binding proteins, it binds directly near the 3'-end of the 23S rRNA, where it nucleates assembly of the 50S subunit. This Bartonella bacilliformis (strain ATCC 35685 / KC583 / Herrer 020/F12,63) protein is Large ribosomal subunit protein uL3.